A 520-amino-acid polypeptide reads, in one-letter code: Aldehyde dehydrogenase 5, mitochondrial (520 aa).

Residues 1–23 (MLSRTRAAAPNSRIFTRSLLRLY) constitute a mitochondrion transit peptide. Residue 266–271 (GSTATG) participates in NAD(+) binding. Glu-288 functions as the Proton acceptor in the catalytic mechanism. Catalysis depends on Cys-322, which acts as the Nucleophile.

This sequence belongs to the aldehyde dehydrogenase family.

It localises to the mitochondrion matrix. It carries out the reaction an aldehyde + NADP(+) + H2O = a carboxylate + NADPH + 2 H(+). The catalysed reaction is an aldehyde + NAD(+) + H2O = a carboxylate + NADH + 2 H(+). The protein operates within alcohol metabolism; ethanol degradation; acetate from ethanol: step 2/2. Induced by potassium ions. Functionally, minor mitochondrial aldehyde dehydrogenase isoform. Plays a role in regulation or biosynthesis of electron transport chain components. Involved in the biosynthesis of acetate during anaerobic growth on glucose. The sequence is that of Aldehyde dehydrogenase 5, mitochondrial (ALD5) from Saccharomyces cerevisiae (strain YJM789) (Baker's yeast).